The sequence spans 416 residues: Formyl-CoA:oxalate CoA-transferase (416 aa).

Residues 17–18 (QS), Arg-38, 72–75 (LNTK), 96–98 (NFH), His-104, and 137–140 (KAYE) contribute to the CoA site. Asp-169 functions as the Nucleophile in the catalytic mechanism. 248 to 250 (GGQ) lines the substrate pocket. CoA is bound at residue 273–275 (QEQ).

This sequence belongs to the CoA-transferase III family. Frc subfamily. As to quaternary structure, homodimer.

It carries out the reaction formyl-CoA + oxalate = oxalyl-CoA + formate. The protein operates within metabolic intermediate degradation; oxalate degradation; CO(2) and formate from oxalate: step 1/2. In terms of biological role, involved in the catabolism of oxalate and in the adapatation to low pH via the induction of the oxalate-dependent acid tolerance response (ATR). Catalyzes the transfer of the CoA moiety from formyl-CoA to oxalate. The polypeptide is Formyl-CoA:oxalate CoA-transferase (Escherichia coli O6:H1 (strain CFT073 / ATCC 700928 / UPEC)).